A 211-amino-acid chain; its full sequence is Uracil phosphoribosyltransferase (211 aa).

5-phospho-alpha-D-ribose 1-diphosphate-binding positions include R79, R104, and 131–139 (DPMLATGGS). Uracil contacts are provided by residues I196 and 201 to 203 (GDA). A 5-phospho-alpha-D-ribose 1-diphosphate-binding site is contributed by D202.

It belongs to the UPRTase family. It depends on Mg(2+) as a cofactor.

The enzyme catalyses UMP + diphosphate = 5-phospho-alpha-D-ribose 1-diphosphate + uracil. The protein operates within pyrimidine metabolism; UMP biosynthesis via salvage pathway; UMP from uracil: step 1/1. Allosterically activated by GTP. Catalyzes the conversion of uracil and 5-phospho-alpha-D-ribose 1-diphosphate (PRPP) to UMP and diphosphate. In Limosilactobacillus reuteri (strain DSM 20016) (Lactobacillus reuteri), this protein is Uracil phosphoribosyltransferase.